An 888-amino-acid chain; its full sequence is MGQSVLRAVFFLVLGLLGHSHGGFPNTISIGGLFMRNTVQEHSAFRFAVQLYNTNQNTTEKPFHLNYHVDHLDSSNSFSVTNAFCSQFSRGVYAIFGFYDQMSMNTLTSFCGALHTSFVTPSFPTDADVQFVIQMRPALKGAILSLLSYYKWEKFVYLYDTERGFSVLQAIMEAAVQNNWQVTARSVGNIKDVQEFRRIIEEMDRRQEKRYLIDCEVERINTILEQVVILGKHSRGYHYMLANLGFTDILLERVMHGGANITGFQIVNNENPMVQQFIQRWVRLDEREFPEAKNAPLKYTSALTHDAILVIAEAFRYLRRQRVDVSRRGSAGDCLANPAVPWSQGIDIERALKMVQVQGMTGNIQFDTYGRRTNYTIDVYEMKVSGSRKAGYWNEYERFVPFSDQQISNDSSSSENRTIVVTTILESPYVMYKKNHEQLEGNERYEGYCVDLAYEIAKHVRIKYKLSIVGDGKYGARDPETKIWNGMVGELVYGRADIAVAPLTITLVREEVIDFSKPFMSLGISIMIKKPQKSKPGVFSFLDPLAYEIWMCIVFAYIGVSVVLFLVSRFSPYEWHLEDNNEEPRDPQSPPDPPNEFGIFNSLWFSLGAFMQQGCDISPRSLSGRIVGGVWWFFTLIIISSYTANLAAFLTVERMVSPIESAEDLAKQTEIAYGTLDSGSTKEFFRRSKIAVYEKMWSYMKSAEPSVFTKTTADGVARVRKSKGKFAFLLESTMNEYIEQRKPCDTMKVGGNLDSKGYGVATPKGSALGNAVNLAVLKLNEQGLLDKLKNKWWYDKGECGSGGGDSKDKTSALSLSNVAGVFYILVGGLGLAMMVALIEFCYKSRAESKRMKLTKNTQNFKPAPATNTQNYATYREGYNVYGTESVKI.

The first 22 residues, 1–22 (MGQSVLRAVFFLVLGLLGHSHG), serve as a signal peptide directing secretion. The Extracellular segment spans residues 23–546 (GFPNTISIGG…GVFSFLDPLA (524 aa)). Residues N57, N260, N374, N409, and N416 are each glycosylated (N-linked (GlcNAc...) asparagine). A disulfide bond links C85 and C334. L-glutamate is bound by residues P502, T504, and R509. The chain crosses the membrane as a helical span at residues 547-567 (YEIWMCIVFAYIGVSVVLFLV). Residues 568 to 596 (SRFSPYEWHLEDNNEEPRDPQSPPDPPNE) are Cytoplasmic-facing. An intramembrane region (helical; Pore-forming) is located at residues 597–612 (FGIFNSLWFSLGAFMQ). The stretch at 613–615 (QGC) is an intramembrane region. C615 is lipidated: S-palmitoyl cysteine. Residues 616–621 (DISPRS) lie on the Cytoplasmic side of the membrane. A helical transmembrane segment spans residues 622 to 642 (LSGRIVGGVWWFFTLIIISSY). The Extracellular portion of the chain corresponds to 643-817 (TANLAAFLTV…DKTSALSLSN (175 aa)). S680, T681, and E731 together coordinate L-glutamate. Cysteines 744 and 799 form a disulfide. A helical transmembrane segment spans residues 818-838 (VAGVFYILVGGLGLAMMVALI). At 839 to 888 (EFCYKSRAESKRMKLTKNTQNFKPAPATNTQNYATYREGYNVYGTESVKI) the chain is on the cytoplasmic side. The S-palmitoyl cysteine moiety is linked to residue C841. Y871 and Y881 each carry phosphotyrosine.

It belongs to the glutamate-gated ion channel (TC 1.A.10.1) family. GRIA3 subfamily. As to quaternary structure, homotetramer or heterotetramer of pore-forming glutamate receptor subunits. Tetramers may be formed by the dimerization of dimers. Interacts with PICK1, GRIP1 and GRIP2. Found in a complex with GRIA1, GRIA2, GRIA4, CNIH2, CNIH3, CACNG2, CACNG3, CACNG4, CACNG5, CACNG7 and CACNG8. Interacts with CACNG5. Found in a complex with GRIA1, GRIA2, GRIA4, DLG4, CACNG8 and CNIH2.

The protein resides in the cell membrane. It is found in the postsynaptic cell membrane. Its subcellular location is the postsynaptic density membrane. It catalyses the reaction Ca(2+)(in) = Ca(2+)(out). Functionally, ionotropic glutamate receptor that functions as a ligand-gated cation channel, gated by L-glutamate and glutamatergic agonists such as alpha-amino-3-hydroxy-5-methyl-4-isoxazolepropionic acid (AMPA), quisqualic acid, and kainic acid. L-glutamate acts as an excitatory neurotransmitter at many synapses in the central nervous system and plays an important role in fast excitatory synaptic transmission by inducing long-term potentiation. Binding of the excitatory neurotransmitter L-glutamate induces a conformation change, leading to the opening of the cation channel, and thereby converts the chemical signal to an electrical impulse upon entry of calcium. The receptor then desensitizes rapidly and enters a transient inactive state, characterized by the presence of bound agonist. In the presence of CACNG8, shows resensitization which is characterized by a delayed accumulation of current flux upon continued application of glutamate. This chain is Glutamate receptor 3, found in Rattus norvegicus (Rat).